A 766-amino-acid chain; its full sequence is Phosphoribosylformylglycinamidine synthase subunit PurL (766 aa).

The active site involves His-66. Positions 69 and 113 each coordinate ATP. Residue Glu-115 coordinates Mg(2+). Substrate contacts are provided by residues 116–119 (SHNH) and Arg-138. His-117 functions as the Proton acceptor in the catalytic mechanism. Asp-139 contacts Mg(2+). Gln-264 contacts substrate. Mg(2+) is bound at residue Asp-292. Residue 336–338 (ESQ) coordinates substrate. ATP is bound by residues Asn-524 and Gly-561. Residue Asn-562 coordinates Mg(2+). Ser-564 is a substrate binding site.

Belongs to the FGAMS family. As to quaternary structure, monomer. Part of the FGAM synthase complex composed of 1 PurL, 1 PurQ and 2 PurS subunits.

It is found in the cytoplasm. The enzyme catalyses N(2)-formyl-N(1)-(5-phospho-beta-D-ribosyl)glycinamide + L-glutamine + ATP + H2O = 2-formamido-N(1)-(5-O-phospho-beta-D-ribosyl)acetamidine + L-glutamate + ADP + phosphate + H(+). The protein operates within purine metabolism; IMP biosynthesis via de novo pathway; 5-amino-1-(5-phospho-D-ribosyl)imidazole from N(2)-formyl-N(1)-(5-phospho-D-ribosyl)glycinamide: step 1/2. Functionally, part of the phosphoribosylformylglycinamidine synthase complex involved in the purines biosynthetic pathway. Catalyzes the ATP-dependent conversion of formylglycinamide ribonucleotide (FGAR) and glutamine to yield formylglycinamidine ribonucleotide (FGAM) and glutamate. The FGAM synthase complex is composed of three subunits. PurQ produces an ammonia molecule by converting glutamine to glutamate. PurL transfers the ammonia molecule to FGAR to form FGAM in an ATP-dependent manner. PurS interacts with PurQ and PurL and is thought to assist in the transfer of the ammonia molecule from PurQ to PurL. The protein is Phosphoribosylformylglycinamidine synthase subunit PurL of Mycobacterium tuberculosis (strain CDC 1551 / Oshkosh).